The chain runs to 509 residues: MAKAATPKETAAAKKPAAPKKAASAKTASATTVVAATGAVGRVTQVIGAVVDVAFEEGQLPKILNALETDNNGNRLVLEVAQHLGENSVRTIAMDSTEGLVRGQKVTDTGAPIAVPVGKETLGRIMNVIGEPVDEAGPLKTSARRAIHQDAPAYVDQSTEAQILVTGIKVVDLLAPYAKGGKIGLFGGAGVGKTVLIMELINNVAKAHGGYSVFAGVGERTREGNDLYHEMIESGVNKHGGGEGSKAALVYGQMNEPPGARARVALTGLTVAEQFRDEGQDVLFFVDNIFRFTQAGSEVSALLGRIPSAVGYQPTLATDMGQMQERITTTTKGSITSVQAIYVPADDLTDPAPATSFAHLDATTVLSRSIAEKGIYPAVDPLDSTSRMLDPMVVGEEHYEVARKVQGTLQRYKALQDIIAILGMDELSEEDKIAVARARKIERFLSQPFFVAEVFTGSPGKLVALEDTIKGFKGLVNGEYDHLPEAAFYMVGSIEEAVEKAKKLAAEAA.

Residues 1-28 are disordered; it reads MAKAATPKETAAAKKPAAPKKAASAKTA. Residue 187-194 coordinates ATP; sequence GGAGVGKT.

Belongs to the ATPase alpha/beta chains family. As to quaternary structure, F-type ATPases have 2 components, CF(1) - the catalytic core - and CF(0) - the membrane proton channel. CF(1) has five subunits: alpha(3), beta(3), gamma(1), delta(1), epsilon(1). CF(0) has three main subunits: a(1), b(2) and c(9-12). The alpha and beta chains form an alternating ring which encloses part of the gamma chain. CF(1) is attached to CF(0) by a central stalk formed by the gamma and epsilon chains, while a peripheral stalk is formed by the delta and b chains.

It is found in the cell inner membrane. The catalysed reaction is ATP + H2O + 4 H(+)(in) = ADP + phosphate + 5 H(+)(out). Produces ATP from ADP in the presence of a proton gradient across the membrane. The catalytic sites are hosted primarily by the beta subunits. This is ATP synthase subunit beta from Sinorhizobium medicae (strain WSM419) (Ensifer medicae).